The primary structure comprises 509 residues: MASKVIVLDFGGQYSQLIARRIRELKVYCEMLPYNTPLEKIVQENPGGIVFSGGPSSVYGEGAPTVDPEIYRLNIPILGICYGMQLMAHQLGGIVRPAEGREYGKTPLFILNRDRLFAGLNETEICWMSHGDFVAKAPEGFLVTAKTEYTPIAAMENRERNLYAVQFHPEVVHTPKGKEILKNFLYEICGLTPDWTMESFAQKAIREIKEQVGEEKVVCALSGGVDSSVAAVLVHKAIGDNLTCIFVDHGLLRKGEAEEVVRTFKEQFQMNLVFVDAKEQFLAKLKGVRDPEQKRKIIGHEFIRVFEEEAAKLGDIRFLVQGTLYPDVVESGTATAATIKSHHNVGGLPEDMKFQLIEPLKWLFKDEVRELGLELGLPESIVWRHPFPGPGLAVRVLGEITEEKLAILREADYIFIDELKKSGWYRKTWQAFAVLPNLQSVGVMGDERTYAYTIALRAVTSEDGMTADWVRLPYELLEKISARIVGEVKGVNRVVYDITSKPPATIEWE.

A Glutamine amidotransferase type-1 domain is found at 4 to 194 (KVIVLDFGGQ…LYEICGLTPD (191 aa)). The Nucleophile role is filled by Cys-81. Residues His-168 and Glu-170 contribute to the active site. One can recognise a GMPS ATP-PPase domain in the interval 195 to 384 (WTMESFAQKA…LGLPESIVWR (190 aa)). An ATP-binding site is contributed by 222–228 (SGGVDSS).

In terms of assembly, homodimer.

The enzyme catalyses XMP + L-glutamine + ATP + H2O = GMP + L-glutamate + AMP + diphosphate + 2 H(+). It participates in purine metabolism; GMP biosynthesis; GMP from XMP (L-Gln route): step 1/1. Catalyzes the synthesis of GMP from XMP. The chain is GMP synthase [glutamine-hydrolyzing] from Carboxydothermus hydrogenoformans (strain ATCC BAA-161 / DSM 6008 / Z-2901).